A 365-amino-acid polypeptide reads, in one-letter code: Regulatory protein RapG (365 aa).

5 TPR repeats span residues 135 to 168 (GKLY…KKKL), 169 to 202 (ASAL…TSEL), 209 to 242 (AQLL…DEYA), 244 to 284 (SAYY…EPNR), and 326 to 359 (RELS…EELI).

This sequence belongs to the Rap family.

It localises to the cytoplasm. Inhibited by PhrG. In terms of biological role, involved in the regulation of expression of DegU-controlled genes. Inhibits the binding of DegU to the promoter regions of aprE, coding for an extracellular alkaline protease, and comK, a master regulator for development of genetic competence. RapG does not stimulate dephosphorylation of DegU-P. The sequence is that of Regulatory protein RapG (rapG) from Bacillus subtilis (strain 168).